The chain runs to 466 residues: Muscarinic acetylcholine receptor M2 (466 aa).

The Extracellular portion of the chain corresponds to 1-25; it reads MNNSTYINSSSENVIALESPYKTIE. 3 N-linked (GlcNAc...) asparagine glycosylation sites follow: N2, N3, and N8. A helical membrane pass occupies residues 26–48; sequence VVFIVLVAGSLSLVTIIGNILVM. Over 49 to 62 the chain is Cytoplasmic; sequence VSIKVNRHLQTVNN. The chain crosses the membrane as a helical span at residues 63 to 83; sequence YFLFSLACADLIIGIFSMNLY. The Extracellular portion of the chain corresponds to 84 to 100; the sequence is TLYTVIGYWPLGPVVCD. An intrachain disulfide couples C99 to C179. A helical transmembrane segment spans residues 101-122; that stretch reads LWLALDYVVSNASVMNLLIISF. The Important for signaling signature appears at 123–125; it reads DRY. The Cytoplasmic portion of the chain corresponds to 123-142; the sequence is DRYFCVTKPLTYPVKRTTKM. A helical membrane pass occupies residues 143-165; the sequence is AGMMIAAAWVLSFILWAPAILFW. Residues 166-187 lie on the Extracellular side of the membrane; the sequence is QFIVGGRTVPDKDCYIQFFSNP. The chain crosses the membrane as a helical span at residues 188-212; sequence AVTFGTAIAAFYLPVIIMTVLYWQI. Residues 213–387 lie on the Cytoplasmic side of the membrane; that stretch reads SRASKSRIKK…PPSREKKVTR (175 aa). 2 disordered regions span residues 223-265 and 279-315; these read GKKE…KVQN and QGEE…SASQ. Composition is skewed to polar residues over residues 228 to 238 and 246 to 256; these read AQNQDPVSPSL and PNNNNIPTSSD. The segment covering 287–298 has biased composition (low complexity); sequence NDSTSVSVVPSN. Residues 388-410 traverse the membrane as a helical segment; sequence TILAILLAFIITWTPYNVMVLIN. The Extracellular portion of the chain corresponds to 411-418; the sequence is SFCASCIP. A disulfide bridge links C413 with C416. A helical membrane pass occupies residues 419–442; the sequence is GTVWTIGYWLCYINSTINPACYAL. The Important for signaling signature appears at 436-440; it reads NPACY. The Cytoplasmic portion of the chain corresponds to 443–466; it reads CNATFKKTFKHLLMCHYKNIGATR. Residues T446, T450, and T465 each carry the phosphothreonine modification.

It belongs to the G-protein coupled receptor 1 family. Muscarinic acetylcholine receptor subfamily. CHRM2 sub-subfamily.

The protein localises to the cell membrane. It localises to the postsynaptic cell membrane. In terms of biological role, the muscarinic acetylcholine receptor mediates various cellular responses, including inhibition of adenylate cyclase, breakdown of phosphoinositides and modulation of potassium channels through the action of G proteins. Primary transducing effect is adenylate cyclase inhibition. Signaling promotes phospholipase C activity, leading to the release of inositol trisphosphate (IP3); this then triggers calcium ion release into the cytosol. This Gallus gallus (Chicken) protein is Muscarinic acetylcholine receptor M2 (CHRM2).